The primary structure comprises 77 residues: uncharacterized protein (77 aa).

The span at methionine 1–valine 10 shows a compositional bias: basic residues. Residues methionine 1–valine 21 are disordered. Over residues arginine 11–valine 21 the composition is skewed to basic and acidic residues. The TRAM domain occupies proline 20–isoleucine 77.

This is an uncharacterized protein from Methanocaldococcus jannaschii (strain ATCC 43067 / DSM 2661 / JAL-1 / JCM 10045 / NBRC 100440) (Methanococcus jannaschii).